A 188-amino-acid polypeptide reads, in one-letter code: GMP synthase [glutamine-hydrolyzing] subunit A (188 aa).

The region spanning Lys3 to Arg188 is the Glutamine amidotransferase type-1 domain. Cys79 serves as the catalytic Nucleophile. Residues His166 and Glu168 contribute to the active site.

Heterodimer composed of a glutamine amidotransferase subunit (A) and a GMP-binding subunit (B).

The enzyme catalyses XMP + L-glutamine + ATP + H2O = GMP + L-glutamate + AMP + diphosphate + 2 H(+). Its pathway is purine metabolism; GMP biosynthesis; GMP from XMP (L-Gln route): step 1/1. In terms of biological role, catalyzes the synthesis of GMP from XMP. This chain is GMP synthase [glutamine-hydrolyzing] subunit A, found in Ignicoccus hospitalis (strain KIN4/I / DSM 18386 / JCM 14125).